Reading from the N-terminus, the 296-residue chain is Bifunctional protein FolD (296 aa).

Residues 169–171 (GRG), T196, and V237 each bind NADP(+).

This sequence belongs to the tetrahydrofolate dehydrogenase/cyclohydrolase family. Homodimer.

The catalysed reaction is (6R)-5,10-methylene-5,6,7,8-tetrahydrofolate + NADP(+) = (6R)-5,10-methenyltetrahydrofolate + NADPH. It catalyses the reaction (6R)-5,10-methenyltetrahydrofolate + H2O = (6R)-10-formyltetrahydrofolate + H(+). Its pathway is one-carbon metabolism; tetrahydrofolate interconversion. In terms of biological role, catalyzes the oxidation of 5,10-methylenetetrahydrofolate to 5,10-methenyltetrahydrofolate and then the hydrolysis of 5,10-methenyltetrahydrofolate to 10-formyltetrahydrofolate. In Kocuria rhizophila (strain ATCC 9341 / DSM 348 / NBRC 103217 / DC2201), this protein is Bifunctional protein FolD.